Consider the following 455-residue polypeptide: Bleomycin hydrolase (455 aa).

Methionine 1 bears the N-acetylmethionine mark. Catalysis depends on residues cysteine 73 and histidine 372. Lysine 391 carries the post-translational modification N6-acetyllysine. The active site involves asparagine 396.

Belongs to the peptidase C1 family. Homohexamer. Interacts with NUDT12 (via ANK repeats).

The protein localises to the cytoplasm. It is found in the cytoplasmic granule. The catalysed reaction is Inactivates bleomycin B2 (a cytotoxic glycometallopeptide) by hydrolysis of a carboxyamide bond of beta-aminoalanine, but also shows general aminopeptidase activity. The specificity varies somewhat with source, but amino acid arylamides of Met, Leu and Ala are preferred.. Its function is as follows. The normal physiological role of BLM hydrolase is unknown, but it catalyzes the inactivation of the antitumor drug BLM (a glycopeptide) by hydrolyzing the carboxamide bond of its B-aminoalaninamide moiety thus protecting normal and malignant cells from BLM toxicity. The protein is Bleomycin hydrolase (Blmh) of Mus musculus (Mouse).